The primary structure comprises 1082 residues: Importin-4 (1082 aa).

Residue methionine 1 is modified to N-acetylmethionine. In terms of domain architecture, Importin N-terminal spans 24–90; it reads ATEQLQTILR…KSLVLTALQK (67 aa). 6 HEAT repeats span residues 348–385, 390–427, 431–471, 475–513, 896–933, and 937–975; these read KLCP…GAGD, RLLY…NLQP, SYSE…NLGP, PYLP…AAQD, QFVS…HGGC, and DHFP…ASPV.

The protein belongs to the importin beta family. In terms of assembly, found in a cytosolic complex with ASF1 (ASF1A or ASF1B) and histones H3 and H4.

Its subcellular location is the cytoplasm. The protein resides in the nucleus. In terms of biological role, nuclear transport receptor that mediates nuclear import of proteins, such as histones, RPS3A, TNP2 and VDR. Serves as receptor for nuclear localization signals (NLS) in cargo substrates. Is thought to mediate docking of the importin/substrate complex to the nuclear pore complex (NPC) through binding to nucleoporin and the complex is subsequently translocated through the pore by an energy requiring, Ran-dependent mechanism. At the nucleoplasmic side of the NPC, Ran binds to the importin, the importin/substrate complex dissociates and importin is re-exported from the nucleus to the cytoplasm where GTP hydrolysis releases Ran. The directionality of nuclear import is thought to be conferred by an asymmetric distribution of the GTP- and GDP-bound forms of Ran between the cytoplasm and nucleus. Mediates the nuclear import of the histone H3-H4 dimer when in complex with ASF1 (ASF1A or ASF1B). Mediates the ligand-independent nuclear import of vitamin D receptor (VDR). This chain is Importin-4 (Ipo4), found in Mus musculus (Mouse).